A 125-amino-acid polypeptide reads, in one-letter code: Large-conductance mechanosensitive channel (125 aa).

Transmembrane regions (helical) follow at residues 19 to 39 (VGVIIGAAFTAIVKSLVSNLI), 42 to 62 (LIGIFLGKIDLSNLVFSIGSA), and 67 to 87 (GSFLNEVINFLIIAFVVFLMV).

This sequence belongs to the MscL family. As to quaternary structure, homopentamer.

It is found in the cell membrane. Its function is as follows. Channel that opens in response to stretch forces in the membrane lipid bilayer. May participate in the regulation of osmotic pressure changes within the cell. This chain is Large-conductance mechanosensitive channel, found in Limosilactobacillus fermentum (strain NBRC 3956 / LMG 18251) (Lactobacillus fermentum).